We begin with the raw amino-acid sequence, 259 residues long: UPF0246 protein ABBFA_001173 (259 aa).

The protein belongs to the UPF0246 family.

This chain is UPF0246 protein ABBFA_001173, found in Acinetobacter baumannii (strain AB307-0294).